The following is a 43-amino-acid chain: Photosystem I reaction center subunit IX (43 aa).

Residues 7–27 (YLSTAPVLATFWFGLLAGLLI) form a helical membrane-spanning segment.

The protein belongs to the PsaJ family.

Its subcellular location is the plastid. It localises to the chloroplast thylakoid membrane. In terms of biological role, may help in the organization of the PsaE and PsaF subunits. The polypeptide is Photosystem I reaction center subunit IX (Gnetum parvifolium (Small-leaved jointfir)).